A 729-amino-acid polypeptide reads, in one-letter code: Fibroblast growth factor receptor homolog 1 (729 aa).

The N-terminal stretch at 1–36 is a signal peptide; sequence MAAAWSWRASHSTITMTSGSLVVLFLLLSIWQPAVQ. Over 37–309 the chain is Extracellular; sequence VEGRRQMANS…VASGSLHSTS (273 aa). The interval 56–101 is disordered; sequence ARSQNKTPAITNNANQSSTSSADLDDGAADDDDNKADLPVNVSSKP. The segment covering 66–77 has biased composition (low complexity); sequence TNNANQSSTSSA. A glycan (N-linked (GlcNAc...) asparagine) is linked at Asn-70. Over residues 78-89 the composition is skewed to acidic residues; the sequence is DLDDGAADDDDN. N-linked (GlcNAc...) asparagine glycosylation is found at Asn-96, Asn-134, Asn-140, Asn-171, Asn-207, Asn-213, Asn-242, Asn-246, and Asn-282. 2 consecutive Ig-like C2-type domains span residues 106–192 and 203–279; these read PKKM…VIVS and TGPL…NSLG. A disulfide bond links Cys-125 and Cys-174. Residues Cys-220 and Cys-272 are joined by a disulfide bond. The helical transmembrane segment at 310–330 threads the bilayer; sequence FVYIFVFGGLIFIFMTTLFVF. The Cytoplasmic portion of the chain corresponds to 331-729; it reads YAIRKMKHEK…TDNLQKWCNY (399 aa). A Protein kinase domain is found at 416–692; that stretch reads LVLGATLGEG…EIVEYMDKLL (277 aa). Residues 422-430 and Lys-443 contribute to the ATP site; that span reads LGEGAFGRV. The active-site Proton acceptor is Asp-556. The residue at position 587 (Tyr-587) is a Phosphotyrosine; by autocatalysis.

This sequence belongs to the protein kinase superfamily. Tyr protein kinase family. Fibroblast growth factor receptor subfamily. In terms of tissue distribution, in early embryos, expression is specific to mesodermal primordium and invaginated mesodermal cells. At later stages, expression is seen in putative muscle precursor cells and in the CNS.

It localises to the membrane. It carries out the reaction L-tyrosyl-[protein] + ATP = O-phospho-L-tyrosyl-[protein] + ADP + H(+). Its function is as follows. May be required for patterning of muscle precursor cells. May be essential for generation of mesodermal and endodermal layers, invaginations of various types of cells and CNS formation. This is Fibroblast growth factor receptor homolog 1 (htl) from Drosophila melanogaster (Fruit fly).